The chain runs to 148 residues: MQVILLDKIAKLGGLGDQVAVKAGYARNYLIPQGKAVMATKANIETFDARRAELEAKLAAGKAAAEERAAKLGELAAVVIASKAGDEGKLFGSIGTRDVADAITAAGVAVAKSEVRMGNVLRNTGEYEVVVQLHADVKATVQVQVVAL.

This sequence belongs to the bacterial ribosomal protein bL9 family.

Binds to the 23S rRNA. This is Large ribosomal subunit protein bL9 from Aeromonas salmonicida (strain A449).